Consider the following 128-residue polypeptide: Small ribosomal subunit protein bS6 (128 aa).

Belongs to the bacterial ribosomal protein bS6 family.

In terms of biological role, binds together with bS18 to 16S ribosomal RNA. This is Small ribosomal subunit protein bS6 (rpsF) from Thermotoga maritima (strain ATCC 43589 / DSM 3109 / JCM 10099 / NBRC 100826 / MSB8).